Consider the following 737-residue polypeptide: Relaxin receptor 2 (737 aa).

The Extracellular segment spans residues 1–399 (MFPLLHFIVL…SSFEDLLANN (399 aa)). An LDL-receptor class A domain is found at 27 to 64 (LCQKGYFPCGNLTKCLPRAFHCDGVDDCGNGADEDNCG). 3 disulfide bridges follow: Cys28–Cys41, Cys35–Cys54, and Cys48–Cys63. N-linked (GlcNAc...) asparagine glycosylation occurs at Asn37. The N-linked (GlcNAc...) asparagine glycan is linked to Asn121. 10 LRR repeats span residues 121–142 (NTTLLSLKKNKIHSLPDKVFTK), 145–166 (QLKQIFLQHNCITHISRKAFFG), 169–190 (NLQILYLSHNCITTLRPGVFKD), 193–214 (QLTWLILDDNPITRISQQLFTG), 217–238 (SLFFLSMVNNYLEALPKQMCAQ), 241–262 (QLNWMDLEGNGIKYLTNSSFLS), 265–286 (SLTVLFLPRNQIDFVPEKTFSS), 289–310 (NLGELDLSSNMIMELPPEIFKD), 313–334 (LLQKLNLSSNPLLYLHKNQFES), and 337–358 (QLQSLDLERIEIPNINTRMFQP). A glycan (N-linked (GlcNAc...) asparagine) is linked at Asn257. Asn318 carries N-linked (GlcNAc...) asparagine glycosylation. The N-linked (GlcNAc...) asparagine glycan is linked to Asn361. Residues 400-420 (ILRIFVWVIAFITCFGNLFVI) traverse the membrane as a helical segment. Over 421-438 (GMRSFIKAENTTHATSIK) the chain is Cytoplasmic. A helical membrane pass occupies residues 439–459 (ILCCADCLMGVYLFFIGFFDI). The Extracellular segment spans residues 460–478 (KYRGQYQKYALLWMESLQC). Cysteines 478 and 556 form a disulfide. The chain crosses the membrane as a helical span at residues 479 to 501 (RLMGFLAMLSTEVSVLLLTYLTL). The Cytoplasmic segment spans residues 502–520 (EKFLAIVFPFSNIRPGKWQ). The chain crosses the membrane as a helical span at residues 521–541 (TMVILICIWIVGFLIAVIPFW). Topologically, residues 542–575 (KEDYFGNFYGKNGVCFPLYYDQTEDIGSKGYSLG) are extracellular. A helical membrane pass occupies residues 576-596 (IFLGVNLLAFLIIVFSYTIMF). Residues 597–622 (CSIKKTALQTSEVRNPIGREVAVANR) lie on the Cytoplasmic side of the membrane. Residues 623–643 (FFFIVFSDAICWIPVFVIKIL) form a helical membrane-spanning segment. Residues 644-653 (SLFRVEIPGT) lie on the Extracellular side of the membrane. The chain crosses the membrane as a helical span at residues 654 to 674 (ITSWIVIFFLPVNSALNPILY). The Cytoplasmic segment spans residues 675 to 737 (TLTTSFFKDK…LGDSIVKPIS (63 aa)).

The protein belongs to the G-protein coupled receptor 1 family.

Its subcellular location is the cell membrane. In terms of biological role, receptor for relaxin. The activity of this receptor is mediated by G proteins leading to stimulation of adenylate cyclase and an increase of cAMP. May also be a receptor for Leydig insulin-like peptide (INSL3). This chain is Relaxin receptor 2 (RXFP2), found in Canis lupus familiaris (Dog).